A 1210-amino-acid polypeptide reads, in one-letter code: Inner capsid protein VP3 (1210 aa).

The tract at residues 1–28 is disordered; that stretch reads MPRTSRNVRATEVATTAIPPSNAATDTT. The C2H2-type zinc finger occupies 113-136; it reads LRCQQCGAKFSSMTQLAEHVRTEH. The tract at residues 294–319 is disordered; the sequence is PHAGPQVRSVQSQDQQVYSVDSGPDP. Residues 299–315 are compositionally biased toward low complexity; it reads QVRSVQSQDQQVYSVDS.

It belongs to the turreted BTV-fold inner capsid family. Homodecamer; each decamer is made up of two conformers of VP2, called VP2A and VP2B. 12 homodecamers assemble to form an icosahedral capsid. Interacts with VP6.

It localises to the virion. Functionally, inner capsid protein that self-assembles to form an icosahedral capsid with a T=2 symmetry, which consists of 120 copies of VP2, with channels at each of its five-fold vertices. This capsid constitutes the innermost concentric layer of the viral mature particle. The protein is Inner capsid protein VP3 (S3) of Aquareovirus A (isolate Chum salmon/Japan/CSRV/1981) (AQRV-A).